We begin with the raw amino-acid sequence, 365 residues long: Peridinin-chlorophyll a-binding protein, chloroplastic (365 aa).

The N-terminal 52 residues, 1–52, are a transit peptide targeting the chloroplast; it reads MVRGARKAIAVGVAVAVACGLQKHLNFVPGPRHAAPVAAAAASMMMAPAAFA. 2 tandem repeats follow at residues 53 to 215 and 216 to 365.

In terms of assembly, monomer.

The protein resides in the plastid. The protein localises to the chloroplast. In terms of biological role, water-soluble antenna for capture of solar energy in the blue-green range. Peridinin is an asymmetric carotenoid. This chain is Peridinin-chlorophyll a-binding protein, chloroplastic, found in Symbiodinium sp. (Dinoflagellate).